A 233-amino-acid chain; its full sequence is 7-cyano-7-deazaguanine synthase (233 aa).

An ATP-binding site is contributed by 7-17 (LSGGLDSAVTS). Residues cysteine 195, cysteine 206, cysteine 209, and cysteine 212 each coordinate Zn(2+).

It belongs to the QueC family. The cofactor is Zn(2+).

The catalysed reaction is 7-carboxy-7-deazaguanine + NH4(+) + ATP = 7-cyano-7-deazaguanine + ADP + phosphate + H2O + H(+). It participates in purine metabolism; 7-cyano-7-deazaguanine biosynthesis. Functionally, catalyzes the ATP-dependent conversion of 7-carboxy-7-deazaguanine (CDG) to 7-cyano-7-deazaguanine (preQ(0)). The protein is 7-cyano-7-deazaguanine synthase of Methanococcus maripaludis (strain C5 / ATCC BAA-1333).